The chain runs to 91 residues: DNA-directed RNA polymerase subunit Rpo11 (91 aa).

Belongs to the archaeal Rpo11/eukaryotic RPB11/RPC19 RNA polymerase subunit family. In terms of assembly, part of the RNA polymerase complex.

It is found in the cytoplasm. The enzyme catalyses RNA(n) + a ribonucleoside 5'-triphosphate = RNA(n+1) + diphosphate. Functionally, DNA-dependent RNA polymerase (RNAP) catalyzes the transcription of DNA into RNA using the four ribonucleoside triphosphates as substrates. In Methanococcoides burtonii (strain DSM 6242 / NBRC 107633 / OCM 468 / ACE-M), this protein is DNA-directed RNA polymerase subunit Rpo11.